We begin with the raw amino-acid sequence, 172 residues long: Early E3 18.5 kDa glycoprotein (172 aa).

An N-terminal signal peptide occupies residues 1 to 19; sequence MGAILVVLALLSLLGLGSA. The Lumenal segment spans residues 20–136; that stretch reads NLNPLDHDPC…SKENIVAFSI (117 aa). Asparagine 36 carries an N-linked (GlcNAc...) asparagine; by host glycan. 2 disulfide bridges follow: cysteine 37-cysteine 55 and cysteine 49-cysteine 111. 3 N-linked (GlcNAc...) asparagine; by host glycosylation sites follow: asparagine 68, asparagine 72, and asparagine 102. A helical transmembrane segment spans residues 137 to 157; the sequence is AYCLVTCIITAIICVCIHLLI. Topologically, residues 158–172 are cytoplasmic; sequence VIRPRQSNEEKEKMP. The Di-lysine motif signature appears at 168 to 172; the sequence is KEKMP.

Belongs to the adenoviridae E19 family. Post-translationally, both disulfide bonds are absolutely critical for the interaction with MHC antigens. N-glycosylated; high-mannose.

The protein localises to the host endoplasmic reticulum membrane. Binds and retains class I heavy chains in the endoplasmic reticulum during the early period of virus infection, thereby impairing their transport to the cell surface. Also delays the expression of class I alleles that it cannot affect by direct retention. Binds transporters associated with antigen processing (TAP) and acts as a tapasin inhibitor, preventing class I/TAP association. In consequence, infected cells are masked for immune recognition by cytotoxic T-lymphocytes. The polypeptide is Early E3 18.5 kDa glycoprotein (Human adenovirus B serotype 3 (HAdV-3)).